Consider the following 341-residue polypeptide: MGSLKEGQGRDMEEGESEEPLLMAQNQRFTMFPIRYKSIWEMYKKAEASFWTAEEVDLSTDVQQWEALTDSEKHFISHILAFFAASDGIVLENLAARFLNDVQVPEARAFYGFQIAMENIHSEMYSLLLETFIKDSKEKDRLFNAIETIPCISKKAKWCLDWIQSPMSFAVRLVAFACVEGIFFSGSFCAIFWLKKRGLMPGLTFSNELISRDEGLHCDFACLLYSLLQKQLPLEKVYQIVHEAVEIETEFVCKALPCDLIGMNSNLMSQYIQFVADRLLVTLGCERTYKAENPFDWMEFISLQGKTNFFEKRVGEYQKASVMSNLQNGNQNYEFTTEEDF.

Residues 1–20 (MGSLKEGQGRDMEEGESEEP) are disordered. Positions 87, 118, and 121 each coordinate Fe cation. Y125 is a catalytic residue. Fe cation is bound by residues E180, E214, and H217.

This sequence belongs to the ribonucleoside diphosphate reductase small chain family. In terms of assembly, homodimer and heterodimer with TSO2. Heterotetramer of two R1 and two R2 chains. A radical transfer pathway may occur between Tyr-125 of protein R2 and R1. Homodimer contains a dinuclear non-heme iron center and a stable tyrosyl radical essential for activity. A transfer pathway may occur between Tyr-125 of protein R2 and R1. Interacts with CSN7. Fe cation serves as cofactor. As to expression, expressed in rosette leaves, cauline leaves, stems and flowers.

The protein localises to the cytoplasm. The enzyme catalyses a 2'-deoxyribonucleoside 5'-diphosphate + [thioredoxin]-disulfide + H2O = a ribonucleoside 5'-diphosphate + [thioredoxin]-dithiol. With respect to regulation, inhibited by phenol, paracetamol, 2,4,6-trimethylphenol, resveratrol, furfuryl mercaptan, 2-thiophenthiol, phenylhydrazine, and hydroxyurea. Its function is as follows. Provides the precursors necessary for DNA synthesis. Catalyzes the biosynthesis of deoxyribonucleotides from the corresponding ribonucleotides. The chain is Ribonucleoside-diphosphate reductase small chain A (RNR2A) from Arabidopsis thaliana (Mouse-ear cress).